A 114-amino-acid polypeptide reads, in one-letter code: Large ribosomal subunit protein bL17 (114 aa).

Belongs to the bacterial ribosomal protein bL17 family. As to quaternary structure, part of the 50S ribosomal subunit. Contacts protein L32.

This chain is Large ribosomal subunit protein bL17, found in Elusimicrobium minutum (strain Pei191).